A 181-amino-acid chain; its full sequence is ATP-dependent protease subunit HslV (181 aa).

The active site involves threonine 8. Na(+) is bound by residues glycine 165, cysteine 168, and threonine 171.

This sequence belongs to the peptidase T1B family. HslV subfamily. A double ring-shaped homohexamer of HslV is capped on each side by a ring-shaped HslU homohexamer. The assembly of the HslU/HslV complex is dependent on binding of ATP.

Its subcellular location is the cytoplasm. The catalysed reaction is ATP-dependent cleavage of peptide bonds with broad specificity.. Allosterically activated by HslU binding. In terms of biological role, protease subunit of a proteasome-like degradation complex believed to be a general protein degrading machinery. This Oceanobacillus iheyensis (strain DSM 14371 / CIP 107618 / JCM 11309 / KCTC 3954 / HTE831) protein is ATP-dependent protease subunit HslV.